The sequence spans 231 residues: MNYEVVIPAAGQGKRMNAGKNKLFIEAKGIPVIIHTLKVFENHDACKRIILVINEQEFGEFNTLLKTYHFKTPIEMVPGGRERQQSVFAGIKAAGKEETVLVHDGARPFIKREYIEQLVEKAKETGAAIVAVPVKDTIKRVQDGEIAGTIERSSLWAAQTPQAFRLSILMNAHLEAEAKGFLGTDDASLVEEAGGTVAIIQGDYQNIKLTTPDDLLVAEAILEAEKRNEHV.

Belongs to the IspD/TarI cytidylyltransferase family. IspD subfamily.

It catalyses the reaction 2-C-methyl-D-erythritol 4-phosphate + CTP + H(+) = 4-CDP-2-C-methyl-D-erythritol + diphosphate. It participates in isoprenoid biosynthesis; isopentenyl diphosphate biosynthesis via DXP pathway; isopentenyl diphosphate from 1-deoxy-D-xylulose 5-phosphate: step 2/6. In terms of biological role, catalyzes the formation of 4-diphosphocytidyl-2-C-methyl-D-erythritol from CTP and 2-C-methyl-D-erythritol 4-phosphate (MEP). This Bacillus licheniformis (strain ATCC 14580 / DSM 13 / JCM 2505 / CCUG 7422 / NBRC 12200 / NCIMB 9375 / NCTC 10341 / NRRL NRS-1264 / Gibson 46) protein is 2-C-methyl-D-erythritol 4-phosphate cytidylyltransferase.